An 89-amino-acid chain; its full sequence is Putative regulatory protein CPE1749 (89 aa).

The protein belongs to the RemA family.

The protein is Putative regulatory protein CPE1749 of Clostridium perfringens (strain 13 / Type A).